We begin with the raw amino-acid sequence, 166 residues long: Putative peptidyl-prolyl cis-trans isomerase dodo (166 aa).

The region spanning 5–39 (EQLPDGWEKRTSRSTGMSYYLNMYTKESQWDQPTE) is the WW domain. A disordered region spans residues 32 to 53 (SQWDQPTEPAKKAGGGSAGGGD). Positions 44–53 (AGGGSAGGGD) are enriched in gly residues. One can recognise a PpiC domain in the interval 55 to 166 (PDEVHCLHLL…SGLHIILRKA (112 aa)).

It catalyses the reaction [protein]-peptidylproline (omega=180) = [protein]-peptidylproline (omega=0). The sequence is that of Putative peptidyl-prolyl cis-trans isomerase dodo (dod) from Drosophila melanogaster (Fruit fly).